Reading from the N-terminus, the 161-residue chain is Myosin regulatory light chain (161 aa).

Phosphoserine occurs at positions 13 and 14. EF-hand domains lie at 20–55, 56–91, and 93–128; these read EQVAELKEAFELFDKDRTGFIKKDALKTTCKQFGVF, VMEDQLDAMFAEADTTKSGAIGFPEFMSMMSRRMKQ, and SNEQILMNAFKTFDPEGNGYILTKDLSKALTTLGDK.

As to quaternary structure, myosin is a hexamer of 2 heavy chains and 4 light chains (two regulatory light chains and two essential light chains).

The sequence is that of Myosin regulatory light chain (mlcR) from Dictyostelium discoideum (Social amoeba).